Here is a 96-residue protein sequence, read N- to C-terminus: MQALIKISDKQYLVQKGDTLFVPRQKTDIGGTMEIASMARIDGANTVLNPAETVTAKVLGHVKDDKVVVFKKKRRKRYQSRNGHRQQMTQIEVVSL.

A compositionally biased stretch (basic residues) spans 73 to 84 (KRRKRYQSRNGH). Positions 73 to 96 (KRRKRYQSRNGHRQQMTQIEVVSL) are disordered. Over residues 85–96 (RQQMTQIEVVSL) the composition is skewed to polar residues.

It belongs to the bacterial ribosomal protein bL21 family. In terms of assembly, part of the 50S ribosomal subunit. Contacts protein L20.

This protein binds to 23S rRNA in the presence of protein L20. This is Large ribosomal subunit protein bL21 from Chlorobium phaeovibrioides (strain DSM 265 / 1930) (Prosthecochloris vibrioformis (strain DSM 265)).